The primary structure comprises 552 residues: MATATVATTPEGIPVIILKEGSSRTYGKEALRANIAAVKAIEEALKSTYGPRGMDKMLVDSLGDITITNDGATILDKMDLQHPTGKLLVQIAKGQDEETADGTKTAVILAGELAKKAEDLLYKEIHPTIIVSGYKKAEEIALKTIQDIAQPVSINDTDVLRKVALTSLGSKAVAGAREYLADLVVKAVAQVAELRGDKWYVDLDNVQIVKKHGGSINDTQLVYGIVVDKEVVHPGMPKRIENAKIALLDASLEVEKPELDAEIRINDPTQMHKFLEEEENILKEKVDKIAATGANVVICQKGIDEVAQHYLAKKGILAVRRAKKSDLEKLARATGGRVISNIDELTSQDLGYAALVEERKVGEDKMVFVEGAKNPKSVSILIRGGLERVVDETERALRDALGTVADVIRDGRAVAGGGAVEIEIAKRLRKYAPQVGGKEQLAIEAYANAIEGLIMILAENAGLDPIDKLMQLRSLHENETNKWYGLNLFTGNPEDMWKLGVIEPALVKMNAIKAATEAVTLVLRIDDIVAAGKKGGSEPGGKKEKEEKSSED.

A disordered region spans residues 531-552 (AGKKGGSEPGGKKEKEEKSSED). Residues 540–552 (GGKKEKEEKSSED) show a composition bias toward basic and acidic residues.

It belongs to the TCP-1 chaperonin family. As to quaternary structure, forms a heterooligomeric complex of two stacked nine-membered rings; one of alpha and the other of beta subunits. Sometimes called a 'rosettasome'.

It is found in the cytoplasm. It catalyses the reaction ATP + H2O = ADP + phosphate + H(+). Functionally, molecular chaperone; binds unfolded polypeptides in vitro, stimulates protein folding and has ATPase activity. One of the most abundant proteins in the cell at all temperatures. This Saccharolobus shibatae (strain ATCC 51178 / DSM 5389 / JCM 8931 / NBRC 15437 / B12) (Sulfolobus shibatae) protein is Thermosome subunit beta (thsB).